The sequence spans 273 residues: Dermonecrotic toxin LhSicTox-alphaIA2biii (273 aa).

His5 is a catalytic residue. Mg(2+)-binding residues include Glu25 and Asp27. Catalysis depends on His41, which acts as the Nucleophile. 2 disulfide bridges follow: Cys45/Cys51 and Cys47/Cys190. Asp85 lines the Mg(2+) pocket.

It belongs to the arthropod phospholipase D family. Class II subfamily. Mg(2+) serves as cofactor. Expressed by the venom gland.

The protein resides in the secreted. It carries out the reaction an N-(acyl)-sphingosylphosphocholine = an N-(acyl)-sphingosyl-1,3-cyclic phosphate + choline. The enzyme catalyses an N-(acyl)-sphingosylphosphoethanolamine = an N-(acyl)-sphingosyl-1,3-cyclic phosphate + ethanolamine. It catalyses the reaction a 1-acyl-sn-glycero-3-phosphocholine = a 1-acyl-sn-glycero-2,3-cyclic phosphate + choline. The catalysed reaction is a 1-acyl-sn-glycero-3-phosphoethanolamine = a 1-acyl-sn-glycero-2,3-cyclic phosphate + ethanolamine. Functionally, dermonecrotic toxins cleave the phosphodiester linkage between the phosphate and headgroup of certain phospholipids (sphingolipid and lysolipid substrates), forming an alcohol (often choline) and a cyclic phosphate. This toxin acts on sphingomyelin (SM). It may also act on ceramide phosphoethanolamine (CPE), lysophosphatidylcholine (LPC) and lysophosphatidylethanolamine (LPE), but not on lysophosphatidylserine (LPS), and lysophosphatidylglycerol (LPG). It acts by transphosphatidylation, releasing exclusively cyclic phosphate products as second products. Induces dermonecrosis, hemolysis, increased vascular permeability, edema, inflammatory response, and platelet aggregation. This chain is Dermonecrotic toxin LhSicTox-alphaIA2biii, found in Loxosceles hirsuta (Recluse spider).